The following is a 282-amino-acid chain: TPR repeat protein oca3 (282 aa).

4 TPR repeats span residues 16–50, 71–104, 139–172, and 174–211; these read IVAL…ALTT, PRVE…DPTH, LEAW…QPFE, and RLFA…CEEY.

The protein localises to the cytoplasm. It is found in the nucleus. Its function is as follows. May be involved in cell cycle regulation. The polypeptide is TPR repeat protein oca3 (oca3) (Schizosaccharomyces pombe (strain 972 / ATCC 24843) (Fission yeast)).